A 187-amino-acid chain; its full sequence is 2-oxoglutarate synthase subunit KorC (187 aa).

Heterotetramer of the KorA, KorB, KorC and KorD subunits.

It carries out the reaction 2 oxidized [2Fe-2S]-[ferredoxin] + 2-oxoglutarate + CoA = succinyl-CoA + 2 reduced [2Fe-2S]-[ferredoxin] + CO2 + H(+). The chain is 2-oxoglutarate synthase subunit KorC (korC) from Archaeoglobus fulgidus (strain ATCC 49558 / DSM 4304 / JCM 9628 / NBRC 100126 / VC-16).